The chain runs to 259 residues: Phosphate import ATP-binding protein PstB (259 aa).

In terms of domain architecture, ABC transporter spans 13–254 (LEVNNLNFHY…PRLQRTEDYI (242 aa)). An ATP-binding site is contributed by 45–52 (GPSGCGKS).

Belongs to the ABC transporter superfamily. Phosphate importer (TC 3.A.1.7) family. As to quaternary structure, the complex is composed of two ATP-binding proteins (PstB), two transmembrane proteins (PstC and PstA) and a solute-binding protein (PstS).

It localises to the cell inner membrane. The enzyme catalyses phosphate(out) + ATP + H2O = ADP + 2 phosphate(in) + H(+). Part of the ABC transporter complex PstSACB involved in phosphate import. Responsible for energy coupling to the transport system. The chain is Phosphate import ATP-binding protein PstB from Pasteurella multocida (strain Pm70).